The sequence spans 1379 residues: Partitioning defective protein 3 (1379 aa).

Residues M1 to C23 show a composition bias toward low complexity. Disordered regions lie at residues M1–T32 and Y208–K335. 2 stretches are compositionally biased toward polar residues: residues S239 to S256 and I272 to S284. Basic and acidic residues-rich tracts occupy residues E302–S315 and D322–K335. PDZ domains lie at L381 to R483 and V515 to S599. Residues T606–K626 are a coiled coil. Residues V659–R750 enclose the PDZ 3 domain. 5 disordered regions span residues D767–A873, H887–M918, Q949–V1085, V1273–S1301, and A1350–Y1379. 2 stretches are compositionally biased toward low complexity: residues S776–S786 and A798–A826. Basic and acidic residues-rich tracts occupy residues L828–E844 and F854–G869. The span at P894–R912 shows a compositional bias: low complexity. Polar residues predominate over residues Q967–Q977. Basic and acidic residues-rich tracts occupy residues K1030 to P1040 and S1048 to N1060. Over residues S1290–S1301 the composition is skewed to low complexity.

This sequence belongs to the PAR3 family. In terms of assembly, required, together with pkc-3, for the localization of par-6; par-6 is involved in localizing/maintaining par-3 at the cell periphery. Interacts with par-6 and pkc-3 for localization at the periphery of anterior cortex of the embryo. As to expression, asymmetrically distributed at the periphery of the zygote and in dividing blastomeres of the germline lineage. Coexpressed with par-6; patchy expression observed at the periphery after completion of meiosis I and in meiosis II. On completion of metaphase II, expression is restricted to the anterior 85% of embryo length; this decreases to 55% in embryos between prophase and telophase of the first mitosis. During the first cleavage, expression is detected in the advancing furrow. Transiently coexpressed and colocalized asymmetrically with par-6 and pkc-3, in the developing somatic gonad, including the spermathecal precursor cells of L4 larvae.

It is found in the cytoplasm. In terms of biological role, in cooperation with pkc-3, required for establishing cell polarity and regulating spindle orientation in the early embryo. Localization is crucial for recruiting par-6 and pkc-3 to the peripheral apical cortex and restricting par-2 to basolateral surfaces. Necessary for apicobasal and anterior-posterior asymmetries associated with cell adhesion and gastrulation during the first few cycles of embryogenesis, and also for epithelial cell polarity in the distal spermatheca. Regulates the asymmetric localization of csnk-1, ppk-1 and gpr-1/2 during the first embryonic division. The polypeptide is Partitioning defective protein 3 (Caenorhabditis elegans).